The following is a 166-amino-acid chain: Large ribosomal subunit protein uL10 (166 aa).

It belongs to the universal ribosomal protein uL10 family. In terms of assembly, part of the ribosomal stalk of the 50S ribosomal subunit. The N-terminus interacts with L11 and the large rRNA to form the base of the stalk. The C-terminus forms an elongated spine to which L12 dimers bind in a sequential fashion forming a multimeric L10(L12)X complex.

In terms of biological role, forms part of the ribosomal stalk, playing a central role in the interaction of the ribosome with GTP-bound translation factors. This is Large ribosomal subunit protein uL10 from Pseudomonas paraeruginosa (strain DSM 24068 / PA7) (Pseudomonas aeruginosa (strain PA7)).